The following is a 397-amino-acid chain: Phosphoglycerate kinase (397 aa).

Residues 26–28 (DLN), R42, 65–68 (HLGR), R119, and R152 each bind substrate. ATP is bound by residues K203, E325, and 351-354 (GGDT).

Belongs to the phosphoglycerate kinase family. Monomer.

The protein localises to the cytoplasm. It carries out the reaction (2R)-3-phosphoglycerate + ATP = (2R)-3-phospho-glyceroyl phosphate + ADP. Its pathway is carbohydrate degradation; glycolysis; pyruvate from D-glyceraldehyde 3-phosphate: step 2/5. This is Phosphoglycerate kinase from Bordetella bronchiseptica (strain ATCC BAA-588 / NCTC 13252 / RB50) (Alcaligenes bronchisepticus).